Reading from the N-terminus, the 594-residue chain is Dictomallein-4 (594 aa).

Residues 1 to 18 (MKLVLIFLIINFLLIINC) form the signal peptide. The 262-residue stretch at 147 to 408 (PDVSQDYTLK…QNYFKNSIYY (262 aa)) folds into the Peptidase M66 domain. Position 300 (His-300) interacts with Zn(2+). Glu-301 is an active-site residue. Zn(2+) is bound by residues His-304 and His-310.

The protein belongs to the dictomallein family. Zn(2+) is required as a cofactor.

Its subcellular location is the secreted. The polypeptide is Dictomallein-4 (dtmlD) (Dictyostelium discoideum (Social amoeba)).